A 459-amino-acid polypeptide reads, in one-letter code: N,N-dimethyl phenylurea N-demethylase subunit alpha (459 aa).

The Rieske domain maps to 55-166; that stretch reads WVFVAHETEI…VESYHGFIFT (112 aa). 4 residues coordinate [2Fe-2S] cluster: Cys-97, His-99, Cys-117, and His-120. The Fe cation site is built by His-225, His-230, and Asp-386.

The protein belongs to the bacterial ring-hydroxylating dioxygenase alpha subunit family. As to quaternary structure, pdmA (subunit alpha) and PdmB (subunit beta) form the oxygenase component of a bacterial Rieske non-heme iron oxygenase (RO) system. The cofactor is [2Fe-2S] cluster. Fe cation is required as a cofactor.

The catalysed reaction is a 1,1-dimethyl-3-phenylurea + 2 reduced [2Fe-2S]-[ferredoxin] + O2 + 2 H(+) = a 1-methyl-3-phenylurea + formaldehyde + 2 oxidized [2Fe-2S]-[ferredoxin] + H2O. The enzyme catalyses isoproturon + 2 reduced [2Fe-2S]-[ferredoxin] + O2 + 2 H(+) = 1-methyl-3-[4-(propan-2-yl)phenyl]urea + formaldehyde + 2 oxidized [2Fe-2S]-[ferredoxin] + H2O. It carries out the reaction chlorotoluron + 2 reduced [2Fe-2S]-[ferredoxin] + O2 + 2 H(+) = 3-(3-chloro-4-methylphenyl)-1-methylurea + formaldehyde + 2 oxidized [2Fe-2S]-[ferredoxin] + H2O. It catalyses the reaction metoxuron + 2 reduced [2Fe-2S]-[ferredoxin] + O2 + 2 H(+) = 3-(3-chloro-4-methoxylphenyl)-1-methylurea + formaldehyde + 2 oxidized [2Fe-2S]-[ferredoxin] + H2O. The catalysed reaction is monuron + 2 reduced [2Fe-2S]-[ferredoxin] + O2 + 2 H(+) = 3-(4-chlorophenyl)-1-methylurea + formaldehyde + 2 oxidized [2Fe-2S]-[ferredoxin] + H2O. The enzyme catalyses diuron + 2 reduced [2Fe-2S]-[ferredoxin] + O2 + 2 H(+) = 3-(3,4-dichlorophenyl)-1-methylurea + formaldehyde + 2 oxidized [2Fe-2S]-[ferredoxin] + H2O. It carries out the reaction fluometuron + 2 reduced [2Fe-2S]-[ferredoxin] + O2 + 2 H(+) = 3-[3-(trifluoromethyl)phenyl]-1-methylurea + formaldehyde + 2 oxidized [2Fe-2S]-[ferredoxin] + H2O. It catalyses the reaction fenuron + 2 reduced [2Fe-2S]-[ferredoxin] + O2 + 2 H(+) = 1-methyl-3-phenylurea + formaldehyde + 2 oxidized [2Fe-2S]-[ferredoxin] + H2O. It functions in the pathway xenobiotic degradation. Activity is stimulated in vitro by coexpression of a [3Fe-4S]-type ferredoxin. Its function is as follows. Part of the multicomponent N,N-dimethyl phenylurea N-demethylase responsible for the initial N-demethylation step during the bacterial metabolism of N,N-dimethyl-substituted phenylurea herbicides. Catalyzes the mono-N-demethylation of N,N-dimethyl-substituted phenylurea herbicides to their mono-N-demethylated derivatives. Is active on isoproturon (IPU), chlorotoluron, metoxuron, monoron, diuron, fluometuron and fenuron, but cannot transform the N-methoxy-N-methyl-substituted herbicides. The polypeptide is N,N-dimethyl phenylurea N-demethylase subunit alpha (Sphingobium sp. (strain YBL2)).